Consider the following 578-residue polypeptide: Probable methylcrotonoyl-CoA carboxylase beta chain, mitochondrial (578 aa).

The N-terminal 29 residues, 1 to 29, are a transit peptide targeting the mitochondrion; the sequence is MIRLNWLFRSSSVLLRSQVRLLHVGDANV. Residues 48-305 enclose the CoA carboxyltransferase N-terminal domain; the sequence is MASLVGDLRN…SATNSYNDQL (258 aa). Positions 48-570 are carboxyltransferase; sequence MASLVGDLRN…KAALNNAGQE (523 aa). The CoA carboxyltransferase C-terminal domain maps to 321–570; that stretch reads AVEEPRYDAE…KAALNNAGQE (250 aa). Residues 355–388 are acyl-CoA binding; that stretch reads DGSRFTEFKKLYGETLVCGFAKLYGHTVGIVGNN.

The protein belongs to the AccD/PCCB family. In terms of tissue distribution, expressed in third instar larval ring gland (lateral and medial secretory cells and corpus cardiacum cells) and CNS.

It localises to the mitochondrion matrix. The catalysed reaction is 3-methylbut-2-enoyl-CoA + hydrogencarbonate + ATP = 3-methyl-(2E)-glutaconyl-CoA + ADP + phosphate + H(+). It participates in amino-acid degradation; L-leucine degradation; (S)-3-hydroxy-3-methylglutaryl-CoA from 3-isovaleryl-CoA: step 2/3. Its function is as follows. Carboxyltransferase subunit of the 3-methylcrotonyl-CoA carboxylase, an enzyme that catalyzes the conversion of 3-methylcrotonyl-CoA to 3-methylglutaconyl-CoA, a critical step for leucine and isovaleric acid catabolism. Vital for adult survival. This is Probable methylcrotonoyl-CoA carboxylase beta chain, mitochondrial from Drosophila melanogaster (Fruit fly).